Here is a 73-residue protein sequence, read N- to C-terminus: uncharacterized protein (73 aa).

The next 2 helical transmembrane spans lie at leucine 4 to valine 24 and alanine 51 to leucine 71.

It localises to the cell membrane. This is an uncharacterized protein from Escherichia coli O157:H7.